The following is a 222-amino-acid chain: Capsular polysaccharide type 8 biosynthesis protein cap8A (222 aa).

Helical transmembrane passes span 20–40 (ILII…FFVL) and 172–192 (VVNL…YIFF).

This sequence belongs to the CpsC/CapA family.

The protein resides in the cell membrane. Its function is as follows. Required for the biosynthesis of type 8 capsular polysaccharide (Cap8/CP8). Might act as the chain-length regulator. The chain is Capsular polysaccharide type 8 biosynthesis protein cap8A (cap8A) from Staphylococcus aureus.